The chain runs to 120 residues: U15-barytoxin-Tl1c (120 aa).

The signal sequence occupies residues 1-16; the sequence is MKLFMVLVASFAFAVA. 4 cysteine pairs are disulfide-bonded: cysteine 55-cysteine 73, cysteine 66-cysteine 79, cysteine 70-cysteine 118, and cysteine 72-cysteine 89.

The protein belongs to the neurotoxin 03 (Tx2) family. 03 subfamily. In terms of tissue distribution, expressed by the venom gland.

It localises to the secreted. Functionally, ion channel inhibitor. This is U15-barytoxin-Tl1c from Trittame loki (Brush-footed trapdoor spider).